Consider the following 134-residue polypeptide: Small ribosomal subunit protein uS9 (134 aa).

The tract at residues 113-134 (REVERKKYGLKKARRAPQFSKR) is disordered. The segment covering 120 to 134 (YGLKKARRAPQFSKR) has biased composition (basic residues).

Belongs to the universal ribosomal protein uS9 family.

The chain is Small ribosomal subunit protein uS9 (rpsI) from Thermotoga maritima (strain ATCC 43589 / DSM 3109 / JCM 10099 / NBRC 100826 / MSB8).